We begin with the raw amino-acid sequence, 426 residues long: Phosphoribosylamine--glycine ligase (426 aa).

The region spanning 113-320 is the ATP-grasp domain; sequence KSLMTEAKIP…LLELLYRAST (208 aa). 139 to 200 provides a ligand contact to ATP; that stretch reads LESKSIPIVI…EEFMEGQEAS (62 aa). Glu-290 and Asn-292 together coordinate Mg(2+).

It belongs to the GARS family. Requires Mg(2+) as cofactor. Mn(2+) is required as a cofactor.

The catalysed reaction is 5-phospho-beta-D-ribosylamine + glycine + ATP = N(1)-(5-phospho-beta-D-ribosyl)glycinamide + ADP + phosphate + H(+). It functions in the pathway purine metabolism; IMP biosynthesis via de novo pathway; N(1)-(5-phospho-D-ribosyl)glycinamide from 5-phospho-alpha-D-ribose 1-diphosphate: step 2/2. In Leptospira interrogans serogroup Icterohaemorrhagiae serovar Lai (strain 56601), this protein is Phosphoribosylamine--glycine ligase.